Consider the following 1310-residue polypeptide: Vacuolating cytotoxin autotransporter (1310 aa).

Residues 1–30 form the signal peptide; that stretch reads MEIQQTHRKINRPIISLALVGVLMGTELGA. The tract at residues 339–364 is disordered; the sequence is PEGGYESKTKDNPQNNPKNDAQKTEI. Polar residues predominate over residues 350–364; the sequence is NPQNNPKNDAQKTEI. Positions 1038–1310 constitute an Autotransporter domain; it reads KYEKPTNVWA…ASNLGMRYSF (273 aa).

The protein resides in the periplasm. The protein localises to the secreted. Its subcellular location is the cell surface. It localises to the cell outer membrane. Its function is as follows. Induces vacuolation of eukaryotic cells. Causes ulceration and gastric lesions. The protein is Vacuolating cytotoxin autotransporter (vacA) of Helicobacter pylori (Campylobacter pylori).